The chain runs to 122 residues: Riboflavin kinase (122 aa).

Residue 4–9 coordinates CDP; the sequence is GFGEGA. Residues Thr33 and Asn35 each contribute to the Mg(2+) site. Residues Thr84 and Glu92 each coordinate FMN. Position 97–100 (97–100) interacts with CDP; that stretch reads VNLR.

The protein belongs to the archaeal riboflavin kinase family. Mg(2+) serves as cofactor.

The catalysed reaction is riboflavin + CTP = CDP + FMN + H(+). Its pathway is cofactor biosynthesis; FMN biosynthesis; FMN from riboflavin (CTP route): step 1/1. Catalyzes the CTP-dependent phosphorylation of riboflavin (vitamin B2) to form flavin mononucleotide (FMN). This Methanothermobacter thermautotrophicus (strain ATCC 29096 / DSM 1053 / JCM 10044 / NBRC 100330 / Delta H) (Methanobacterium thermoautotrophicum) protein is Riboflavin kinase.